Here is a 510-residue protein sequence, read N- to C-terminus: Scarecrow-like protein 29 (510 aa).

The tract at residues 90–142 (LDLPPEIQQPNDQSRKRSHDGFLEAQQVKKSARSKRKAIKSSEKSSKDGNKEG) is disordered. Over residues 102-111 (QSRKRSHDGF) the composition is skewed to basic and acidic residues. Basic residues predominate over residues 119–128 (KSARSKRKAI). A compositionally biased stretch (basic and acidic residues) spans 129–142 (KSSEKSSKDGNKEG). One can recognise a GRAS domain in the interval 136–510 (KDGNKEGRWA…EAVSFCSLWK (375 aa)). Residues 143–205 (RWAEKLLNPC…HLSSSSVSSS (63 aa)) form a leucine repeat I (LRI) region. A VHIID region spans residues 224 to 294 (LLKFYEVSPW…GPPPRVRITV (71 aa)). Residues 259-263 (LHIID) carry the VHIID motif. A leucine repeat II (LRII) region spans residues 312–337 (NYGSQLLGFARSLKINLQISVLDKLQ). The segment at 347–435 (LIVCAQFRLH…RKLMEGEATK (89 aa)) is PFYRE. Residues 438 to 510 (MNAGDMNEGK…EAVSFCSLWK (73 aa)) are SAW.

This sequence belongs to the GRAS family. In terms of tissue distribution, expressed in seedlings, roots and flowers.

The protein resides in the nucleus. Its function is as follows. Probable transcription factor involved in plant development. The polypeptide is Scarecrow-like protein 29 (SCL29) (Arabidopsis thaliana (Mouse-ear cress)).